The following is a 214-amino-acid chain: Holliday junction branch migration complex subunit RuvA (214 aa).

The interval 1–63 (MISFLRGPVA…EDSMTLYGFA (63 aa)) is domain I. A domain II region spans residues 64–139 (DPDEREVFEI…KLVPHGTVNG (76 aa)). Residues 139–143 (GAPAS) are flexible linker. Residues 144–214 (PSAQWKPQVV…SAGRQVTARG (71 aa)) form a domain III region.

It belongs to the RuvA family. Homotetramer. Forms an RuvA(8)-RuvB(12)-Holliday junction (HJ) complex. HJ DNA is sandwiched between 2 RuvA tetramers; dsDNA enters through RuvA and exits via RuvB. An RuvB hexamer assembles on each DNA strand where it exits the tetramer. Each RuvB hexamer is contacted by two RuvA subunits (via domain III) on 2 adjacent RuvB subunits; this complex drives branch migration. In the full resolvosome a probable DNA-RuvA(4)-RuvB(12)-RuvC(2) complex forms which resolves the HJ.

The protein localises to the cytoplasm. The RuvA-RuvB-RuvC complex processes Holliday junction (HJ) DNA during genetic recombination and DNA repair, while the RuvA-RuvB complex plays an important role in the rescue of blocked DNA replication forks via replication fork reversal (RFR). RuvA specifically binds to HJ cruciform DNA, conferring on it an open structure. The RuvB hexamer acts as an ATP-dependent pump, pulling dsDNA into and through the RuvAB complex. HJ branch migration allows RuvC to scan DNA until it finds its consensus sequence, where it cleaves and resolves the cruciform DNA. The chain is Holliday junction branch migration complex subunit RuvA from Renibacterium salmoninarum (strain ATCC 33209 / DSM 20767 / JCM 11484 / NBRC 15589 / NCIMB 2235).